The chain runs to 598 residues: Aspartate--tRNA ligase (598 aa).

Glu-175 lines the L-aspartate pocket. The segment at 199 to 202 is aspartate; sequence QLFK. Position 221 (Arg-221) interacts with L-aspartate. ATP contacts are provided by residues 221–223 and Gln-230; that span reads RDE. His-450 lines the L-aspartate pocket. Position 486 (Glu-486) interacts with ATP. Arg-493 provides a ligand contact to L-aspartate. Residue 538–541 coordinates ATP; that stretch reads GLDR.

It belongs to the class-II aminoacyl-tRNA synthetase family. Type 1 subfamily. In terms of assembly, homodimer.

The protein resides in the cytoplasm. The enzyme catalyses tRNA(Asp) + L-aspartate + ATP = L-aspartyl-tRNA(Asp) + AMP + diphosphate. In terms of biological role, catalyzes the attachment of L-aspartate to tRNA(Asp) in a two-step reaction: L-aspartate is first activated by ATP to form Asp-AMP and then transferred to the acceptor end of tRNA(Asp). The sequence is that of Aspartate--tRNA ligase from Lactiplantibacillus plantarum (strain ATCC BAA-793 / NCIMB 8826 / WCFS1) (Lactobacillus plantarum).